Reading from the N-terminus, the 85-residue chain is Alpha-toxin Ac2 (85 aa).

An N-terminal signal peptide occupies residues 1–19 (MNYLVMISLALLFMTGVES). In terms of domain architecture, LCN-type CS-alpha/beta spans 21–83 (KDGYIVDDRN…VRTKGPGRCK (63 aa)). Intrachain disulfides connect Cys31-Cys82, Cys35-Cys55, Cys41-Cys65, and Cys45-Cys67. A Lysine amide modification is found at Lys83.

It belongs to the long (4 C-C) scorpion toxin superfamily. Sodium channel inhibitor family. Alpha subfamily. As to expression, expressed by the venom gland.

Its subcellular location is the secreted. Functionally, alpha toxins bind voltage-independently at site-3 of sodium channels (Nav) and inhibit the inactivation of the activated channels, thereby blocking neuronal transmission. The protein is Alpha-toxin Ac2 of Androctonus crassicauda (Arabian fat-tailed scorpion).